The chain runs to 284 residues: D-tagatose-1,6-bisphosphate aldolase subunit GatY (284 aa).

The Proton donor role is filled by Asp-82. 2 residues coordinate Zn(2+): His-83 and His-180. Gly-181 provides a ligand contact to dihydroxyacetone phosphate. Residue His-208 participates in Zn(2+) binding. Residues 209 to 211 (GAS) and 230 to 233 (NVAT) contribute to the dihydroxyacetone phosphate site.

This sequence belongs to the class II fructose-bisphosphate aldolase family. TagBP aldolase GatY subfamily. Forms a complex with GatZ. The cofactor is Zn(2+).

The catalysed reaction is D-tagatofuranose 1,6-bisphosphate = D-glyceraldehyde 3-phosphate + dihydroxyacetone phosphate. It functions in the pathway carbohydrate metabolism; D-tagatose 6-phosphate degradation; D-glyceraldehyde 3-phosphate and glycerone phosphate from D-tagatose 6-phosphate: step 2/2. Catalytic subunit of the tagatose-1,6-bisphosphate aldolase GatYZ, which catalyzes the reversible aldol condensation of dihydroxyacetone phosphate (DHAP or glycerone-phosphate) with glyceraldehyde 3-phosphate (G3P) to produce tagatose 1,6-bisphosphate (TBP). Requires GatZ subunit for full activity and stability. Is involved in the catabolism of galactitol. This Salmonella newport (strain SL254) protein is D-tagatose-1,6-bisphosphate aldolase subunit GatY.